The following is a 390-amino-acid chain: MPPSGLRLLPLLLPLLWLLVLTPSRPAAGLSTCKTIDMELVKRKRIETIRGQILSKLRLASPPSQGEVPPGPLPEAVLALYNSTRDRVAGESAEPEPEPEADYYAKEVTRVLMVETHNEIYDKFKQSTHSIYMFFNTSELREAVPEPVLLSRAELRLLRLKLKVEQHVELYQKYSNNSWRYLSNRLLAPSNSPEWLSFDVTGVVRQWLSRGGEIEGFRLSAHCSCDSKDNTLQVDINGFTTGRRGDLATIHGMNRPFLLLMATPLERAQHLQSSRHRRALDTNYCFSSTEKNCCVRQLYIDFRKDLGWKWIHEPKGYHANFCLGPCPYIWSLDTQYSKVLALYNQHNPGASAAPCCVPQALEPLPIVYYVGRKPKVEQLSNMIVRSCKCS.

A signal peptide spans 1 to 29; that stretch reads MPPSGLRLLPLLLPLLWLLVLTPSRPAAG. A straightjacket domain region spans residues 30 to 74; that stretch reads LSTCKTIDMELVKRKRIETIRGQILSKLRLASPPSQGEVPPGPLP. Residues 75–271 form an arm domain region; sequence EAVLALYNST…ATPLERAQHL (197 aa). N-linked (GlcNAc...) asparagine glycosylation is found at N82, N136, and N176. The interval 226–252 is bowtie tail; that stretch reads DSKDNTLQVDINGFTTGRRGDLATIHG. Positions 244–246 match the Cell attachment site motif; the sequence is RGD. Cystine bridges form between C285-C294, C293-C356, C322-C387, and C326-C389.

The protein belongs to the TGF-beta family. Homodimer; disulfide-linked. Interacts with the serine proteases, HTRA1 and HTRA3: the interaction with either inhibits TGFB1-mediated signaling and the HTRA protease activity is required for this inhibition. May interact with THSD4; this interaction may lead to sequestration by FBN1 microfibril assembly and attenuation of TGFB signaling. Interacts with CD109, DPT and ASPN. Interacts with EFEMP2. Interacts with TSKU; the interaction contributes to regulation of the hair cycle. Interacts with TGFBR3. As to quaternary structure, homodimer; disulfide-linked. Interacts with transforming growth factor beta-1 (TGF-beta-1) chain; interaction is non-covalent and maintains TGF-beta-1 in a latent state; each latency-associated peptide (LAP) monomer interacts with TGF-beta-1 in the other monomer. Interacts with LTBP1; leading to regulation of TGF-beta-1 activation. Interacts with LRRC32/GARP; leading to regulation of TGF-beta-1 activation on the surface of activated regulatory T-cells (Tregs). Interacts with LRRC33/NRROS; leading to regulation of TGF-beta-1 activation in macrophages and microglia. Interacts (via cell attachment site) with integrins ITGAV and ITGB6 (ITGAV:ITGB6), leading to release of the active TGF-beta-1. Interacts with NREP; the interaction results in a decrease in TGFB1 autoinduction. Interacts with HSP90AB1; inhibits latent TGFB1 activation. In terms of assembly, homodimer; disulfide-linked. Interacts with TGF-beta receptors (TGFBR1 and TGFBR2), leading to signal transduction. In terms of processing, transforming growth factor beta-1 proprotein: The precursor proprotein is cleaved in the Golgi apparatus by FURIN to form Transforming growth factor beta-1 (TGF-beta-1) and Latency-associated peptide (LAP) chains, which remain non-covalently linked, rendering TGF-beta-1 inactive. N-glycosylated. Deglycosylation leads to activation of Transforming growth factor beta-1 (TGF-beta-1); mechanisms triggering deglycosylation-driven activation of TGF-beta-1 are however unclear.

It is found in the secreted. The protein localises to the extracellular space. Its subcellular location is the extracellular matrix. Its function is as follows. Transforming growth factor beta-1 proprotein: Precursor of the Latency-associated peptide (LAP) and Transforming growth factor beta-1 (TGF-beta-1) chains, which constitute the regulatory and active subunit of TGF-beta-1, respectively. Required to maintain the Transforming growth factor beta-1 (TGF-beta-1) chain in a latent state during storage in extracellular matrix. Associates non-covalently with TGF-beta-1 and regulates its activation via interaction with 'milieu molecules', such as LTBP1, LRRC32/GARP and LRRC33/NRROS, that control activation of TGF-beta-1. Interaction with LRRC33/NRROS regulates activation of TGF-beta-1 in macrophages and microglia. Interaction with LRRC32/GARP controls activation of TGF-beta-1 on the surface of activated regulatory T-cells (Tregs). Interaction with integrins (ITGAV:ITGB6 or ITGAV:ITGB8) results in distortion of the Latency-associated peptide chain and subsequent release of the active TGF-beta-1. In terms of biological role, multifunctional protein that regulates the growth and differentiation of various cell types and is involved in various processes, such as normal development, immune function, microglia function and responses to neurodegeneration. Activation into mature form follows different steps: following cleavage of the proprotein in the Golgi apparatus, Latency-associated peptide (LAP) and Transforming growth factor beta-1 (TGF-beta-1) chains remain non-covalently linked rendering TGF-beta-1 inactive during storage in extracellular matrix. At the same time, LAP chain interacts with 'milieu molecules', such as LTBP1, LRRC32/GARP and LRRC33/NRROS that control activation of TGF-beta-1 and maintain it in a latent state during storage in extracellular milieus. TGF-beta-1 is released from LAP by integrins (ITGAV:ITGB6 or ITGAV:ITGB8): integrin-binding to LAP stabilizes an alternative conformation of the LAP bowtie tail and results in distortion of the LAP chain and subsequent release of the active TGF-beta-1. Once activated following release of LAP, TGF-beta-1 acts by binding to TGF-beta receptors (TGFBR1 and TGFBR2), which transduce signal. While expressed by many cells types, TGF-beta-1 only has a very localized range of action within cell environment thanks to fine regulation of its activation by Latency-associated peptide chain (LAP) and 'milieu molecules'. Plays an important role in bone remodeling: acts as a potent stimulator of osteoblastic bone formation, causing chemotaxis, proliferation and differentiation in committed osteoblasts. Can promote either T-helper 17 cells (Th17) or regulatory T-cells (Treg) lineage differentiation in a concentration-dependent manner. At high concentrations, leads to FOXP3-mediated suppression of RORC and down-regulation of IL-17 expression, favoring Treg cell development. At low concentrations in concert with IL-6 and IL-21, leads to expression of the IL-17 and IL-23 receptors, favoring differentiation to Th17 cells. Stimulates sustained production of collagen through the activation of CREB3L1 by regulated intramembrane proteolysis (RIP). Mediates SMAD2/3 activation by inducing its phosphorylation and subsequent translocation to the nucleus. Positively regulates odontoblastic differentiation in dental papilla cells, via promotion of IPO7-mediated translocation of phosphorylated SMAD2 to the nucleus and subsequent transcription of target genes. Can induce epithelial-to-mesenchymal transition (EMT) and cell migration in various cell types. This Chlorocebus aethiops (Green monkey) protein is Transforming growth factor beta-1 proprotein (TGFB1).